The following is a 508-amino-acid chain: Probable cytosol aminopeptidase (508 aa).

The Mn(2+) site is built by Lys-274 and Asp-279. Residue Lys-286 is part of the active site. Mn(2+)-binding residues include Asp-297, Asp-356, and Glu-358. Residue Arg-360 is part of the active site.

Belongs to the peptidase M17 family. It depends on Mn(2+) as a cofactor.

It localises to the cytoplasm. The enzyme catalyses Release of an N-terminal amino acid, Xaa-|-Yaa-, in which Xaa is preferably Leu, but may be other amino acids including Pro although not Arg or Lys, and Yaa may be Pro. Amino acid amides and methyl esters are also readily hydrolyzed, but rates on arylamides are exceedingly low.. It carries out the reaction Release of an N-terminal amino acid, preferentially leucine, but not glutamic or aspartic acids.. Functionally, presumably involved in the processing and regular turnover of intracellular proteins. Catalyzes the removal of unsubstituted N-terminal amino acids from various peptides. This Paraburkholderia phytofirmans (strain DSM 17436 / LMG 22146 / PsJN) (Burkholderia phytofirmans) protein is Probable cytosol aminopeptidase.